Here is a 224-residue protein sequence, read N- to C-terminus: Retinoschisin (224 aa).

A signal peptide spans Met1 to Ser23. The F5/8 type C domain maps to Cys63–Cys219. 2 cysteine pairs are disulfide-bonded: Cys63–Cys219 and Cys110–Cys142.

Homooctamer of 4 homodimers; disulfide-linked. The homooctamer has a flat, cogwheel structure with a diameter of about 14 nm. Two stacked octamers can assemble to form a hexadecamer. As to expression, restricted to the retina (at protein level). Detected in the inner segment of the photoreceptors, the inner nuclear layer, the inner plexiform layer and the ganglion cell layer (at protein level). At the macula, expressed in both the outer and inner nuclear layers and in the inner plexiform layer (at protein level). Detected in retina. Detected only within the photoreceptor cell layer, most prominently within the inner segments of the photoreceptors. Undetectable in the inner plexiform layers and the inner nuclear layer.

Its subcellular location is the secreted. It is found in the cell membrane. Functionally, binds negatively charged membrane lipids, such as phosphatidylserine and phosphoinositides. May play a role in cell-cell adhesion processes in the retina, via homomeric interaction between octamers present on the surface of two neighboring cells. Required for normal structure and function of the retina. The polypeptide is Retinoschisin (RS1) (Homo sapiens (Human)).